We begin with the raw amino-acid sequence, 287 residues long: Pirin-1 (287 aa).

An N-acetylthreonine modification is found at threonine 2.

This sequence belongs to the pirin family. Interacts with the G protein alpha-1 subunit GPA1. Interacts with NFYB6 and NFYB9.

It is found in the nucleus. In terms of biological role, involved in abscisic acid signal transduction. Plays a role in seed germination and early seedling development. Involved in the blue light (BL) signaling. This Arabidopsis thaliana (Mouse-ear cress) protein is Pirin-1 (PRN1).